The chain runs to 605 residues: Ubiquitin carboxyl-terminal hydrolase 2 (605 aa).

Positions 1–200 (MSQLSSTLKR…CPEYLVDYLE (200 aa)) are necessary for interaction with MDM4. Disordered stretches follow at residues 71–107 (LLDY…GSGL) and 237–264 (WETG…KSAQ). The segment covering 90 to 100 (KRAESQTRGTE) has biased composition (basic and acidic residues). Residues 245-255 (PGPSRSSSPGR) show a composition bias toward low complexity. The USP domain occupies 267-599 (AGLRNLGNTC…DAYLLFYELA (333 aa)). C276 (nucleophile) is an active-site residue. The necessary for interaction with MDM4 stretch occupies residues 403 to 503 (YLEREDSRIG…FPKILVLHLK (101 aa)). Zn(2+) is bound by residues C425, C428, C476, and C479. The active-site Proton acceptor is H557.

Belongs to the peptidase C19 family. USP2 subfamily. Homooligomer. Found in trimeric complex with MDM2 and MDM4 and USP2. Interacts with CCND1; the interaction is direct and promotes its stabilization by antagonizing ubiquitin-dependent degradation. Interacts (via N-terminus and C-terminus) with MDM2. Interacts with MDM4. Interacts with PER1. Interacts with KCNQ1; counteracts the NEDD4L-specific down-regulation of I(Ks) and restore plasma membrane localization of KCNQ1. Isoform 4: Interacts with NHERF4 and CLTC. Expressed in mesangial cells of the kidney and in different types of glomerulonephritides (at protein level).

It is found in the cytoplasm. The protein resides in the perinuclear region. Its subcellular location is the nucleus. It localises to the membrane. The enzyme catalyses Thiol-dependent hydrolysis of ester, thioester, amide, peptide and isopeptide bonds formed by the C-terminal Gly of ubiquitin (a 76-residue protein attached to proteins as an intracellular targeting signal).. Cleavage is inhibited by ubiquitin in a dosage-dependent manner. Cleavage is blocked by ubiquitin aldehyde. Functionally, hydrolase that deubiquitinates polyubiquitinated target proteins such as MDM2, MDM4 and CCND1. Isoform 1 and isoform 4 possess both ubiquitin-specific peptidase and isopeptidase activities. Deubiquitinates MDM2 without reversing MDM2-mediated p53/TP53 ubiquitination and thus indirectly promotes p53/TP53 degradation and limits p53 activity. Has no deubiquitinase activity against p53/TP53. Prevents MDM2-mediated degradation of MDM4. Plays a role in the G1/S cell-cycle progression in normal and cancer cells. Regulates the circadian clock by modulating its intrinsic circadian rhythm and its capacity to respond to external cues. Associates with clock proteins and deubiquitinates core clock component PER1 but does not affect its overall stability. Regulates the nucleocytoplasmic shuttling and nuclear retention of PER1 and its repressive role on the clock transcription factors CLOCK and BMAL1. Plays a role in the regulation of myogenic differentiation of embryonic muscle cells. Its function is as follows. Circadian clock output effector that regulates Ca(2+) absorption in the small intestine. Probably functions by regulating protein levels of the membrane scaffold protein NHERF4 in a rhythmic manner, and is therefore likely to control Ca(2+) membrane permeability mediated by the Ca(2+) channel TRPV6 in the intestine. This is Ubiquitin carboxyl-terminal hydrolase 2 (USP2) from Homo sapiens (Human).